We begin with the raw amino-acid sequence, 87 residues long: Small ribosomal subunit protein bS20 (87 aa).

This sequence belongs to the bacterial ribosomal protein bS20 family.

Functionally, binds directly to 16S ribosomal RNA. The polypeptide is Small ribosomal subunit protein bS20 (Geobacter sulfurreducens (strain ATCC 51573 / DSM 12127 / PCA)).